Here is a 265-residue protein sequence, read N- to C-terminus: 4-hydroxy-tetrahydrodipicolinate reductase (265 aa).

9–14 (GPRGRM) is an NAD(+) binding site. Lys-37 contacts NADP(+). NAD(+) is bound by residues 99–101 (GTT) and 125–128 (APNF). The active-site Proton donor/acceptor is the His-155. His-156 serves as a coordination point for (S)-2,3,4,5-tetrahydrodipicolinate. The active-site Proton donor is the Lys-159. 165–166 (GT) provides a ligand contact to (S)-2,3,4,5-tetrahydrodipicolinate. A compositionally biased stretch (basic and acidic residues) spans 178–190 (RESQKQGHPKEEE). Positions 178–200 (RESQKQGHPKEEETLPGARGADM) are disordered.

Belongs to the DapB family.

The protein localises to the cytoplasm. The catalysed reaction is (S)-2,3,4,5-tetrahydrodipicolinate + NAD(+) + H2O = (2S,4S)-4-hydroxy-2,3,4,5-tetrahydrodipicolinate + NADH + H(+). The enzyme catalyses (S)-2,3,4,5-tetrahydrodipicolinate + NADP(+) + H2O = (2S,4S)-4-hydroxy-2,3,4,5-tetrahydrodipicolinate + NADPH + H(+). Its pathway is amino-acid biosynthesis; L-lysine biosynthesis via DAP pathway; (S)-tetrahydrodipicolinate from L-aspartate: step 4/4. Its function is as follows. Catalyzes the conversion of 4-hydroxy-tetrahydrodipicolinate (HTPA) to tetrahydrodipicolinate. This chain is 4-hydroxy-tetrahydrodipicolinate reductase, found in Oceanobacillus iheyensis (strain DSM 14371 / CIP 107618 / JCM 11309 / KCTC 3954 / HTE831).